The chain runs to 445 residues: Inward rectifier potassium channel 4 (445 aa).

Residues 1-55 (MHGHSRNGQAHVPRRKRRNRFVKKNGQCNVYFANLSNKSQRYMADIFTTCVDTRW) lie on the Cytoplasmic side of the membrane. A helical transmembrane segment spans residues 56–80 (RYMLMIFSAAFLVSWLFFGLLFWCI). The Extracellular portion of the chain corresponds to 81 to 120 (AFFHGDLEASPGVPAAGGPAAGGGGAAPVAPKPCIMHVNG). A val/Gly/Ala/Pro stretch region spans residues 91 to 111 (PGVPAAGGPAAGGGGAAPVAP). Residues 121–132 (FLGAFLFSVETQ) constitute an intramembrane region (helical; Pore-forming). The pore-forming intramembrane region spans 133–139 (TTIGYGF). Positions 134–139 (TIGYGF) match the Selectivity filter motif. Over 140–148 (RCVTEECPL) the chain is Extracellular. A helical transmembrane segment spans residues 149–170 (AVIAVVVQSIVGCVIDSFMIGT). Topologically, residues 171-445 (IMAKMARPKK…NISYRRESAI (275 aa)) are cytoplasmic. The short motif at 443-445 (SAI) is the PDZ-binding element.

The protein belongs to the inward rectifier-type potassium channel (TC 1.A.2.1) family. KCNJ4 subfamily. As to quaternary structure, homomultimeric and heteromultimeric association with KCNJ2 and KCNJ12. Interacts with DLG2 and DLG4. Associates, via its PDZ-recognition domain, with a complex containing LIN7A, LIN7B, LIN7C, DLG1, CASK and APBA1. Interacts with TAX1BP3. TAX1BP3 competes with LIN7 family members for KCNJ4 binding. In terms of tissue distribution, heart, skeletal muscle, and several different brain regions including the hippocampus.

The protein localises to the cell membrane. Its subcellular location is the postsynaptic cell membrane. It is found in the cytoplasmic vesicle membrane. It catalyses the reaction K(+)(in) = K(+)(out). Inward rectifier potassium channels are characterized by a greater tendency to allow potassium to flow into the cell rather than out of it. Their voltage dependence is regulated by the concentration of extracellular potassium; as external potassium is raised, the voltage range of the channel opening shifts to more positive voltages. The inward rectification is mainly due to the blockage of outward current by internal magnesium. Can be blocked by extracellular barium and cesium. The protein is Inward rectifier potassium channel 4 (KCNJ4) of Homo sapiens (Human).